A 536-amino-acid chain; its full sequence is Aminopeptidase (536 aa).

The signal sequence occupies residues 1–24 (MSNKNNLRYALGALALSVSAASLA). Positions 152–255 (AGDVTAKVVP…ATYDNGVAWS (104 aa)) constitute a PA domain. A Phosphothreonine modification is found at threonine 196. Positions 296 and 308 each coordinate Zn(2+). Residue glutamate 340 is the Proton acceptor of the active site. Residues glutamate 341, aspartate 369, and histidine 467 each contribute to the Zn(2+) site. Residues cysteine 465 and cysteine 470 are joined by a disulfide bond.

Belongs to the peptidase M28 family. M28A subfamily. Requires Zn(2+) as cofactor.

It localises to the secreted. The enzyme catalyses Release of an N-terminal amino acid, Xaa-|-Yaa-, in which Xaa is preferably Leu, but may be other amino acids including Pro although not Arg or Lys, and Yaa may be Pro. Amino acid amides and methyl esters are also readily hydrolyzed, but rates on arylamides are exceedingly low.. A secreted aminopeptidase. Acts on free N-terminal amino groups with a very strong preference for Leu in the first position. The chain is Aminopeptidase from Pseudomonas aeruginosa (strain UCBPP-PA14).